The following is a 106-amino-acid chain: Large ribosomal subunit protein uL24 (106 aa).

It belongs to the universal ribosomal protein uL24 family. In terms of assembly, part of the 50S ribosomal subunit.

Its function is as follows. One of two assembly initiator proteins, it binds directly to the 5'-end of the 23S rRNA, where it nucleates assembly of the 50S subunit. In terms of biological role, one of the proteins that surrounds the polypeptide exit tunnel on the outside of the subunit. This is Large ribosomal subunit protein uL24 from Acidovorax sp. (strain JS42).